The sequence spans 210 residues: Adenylate kinase (210 aa).

ATP is bound at residue 10–15 (GSGKGT). Positions 30-59 (STGDLFRANISNATPLGKEIKQIVENGQLV) are NMP. AMP contacts are provided by residues threonine 31, arginine 36, 57 to 59 (QLV), 85 to 88 (GFPR), and glutamine 92. The LID stretch occupies residues 121 to 158 (GRRICQSCGGIFNIYTLPTKEKGICDLCKGSLYQRKDD). Arginine 122 is an ATP binding site. Zn(2+)-binding residues include cysteine 125 and cysteine 128. 131–132 (IF) is a binding site for ATP. Residues cysteine 145 and cysteine 148 each contribute to the Zn(2+) site. AMP is bound by residues arginine 155 and arginine 166. ATP is bound at residue lysine 194.

It belongs to the adenylate kinase family. In terms of assembly, monomer.

The protein localises to the cytoplasm. It catalyses the reaction AMP + ATP = 2 ADP. It functions in the pathway purine metabolism; AMP biosynthesis via salvage pathway; AMP from ADP: step 1/1. Its function is as follows. Catalyzes the reversible transfer of the terminal phosphate group between ATP and AMP. Plays an important role in cellular energy homeostasis and in adenine nucleotide metabolism. The chain is Adenylate kinase from Borrelia turicatae (strain 91E135).